A 94-amino-acid chain; its full sequence is Small ribosomal subunit protein uS19 (94 aa).

It belongs to the universal ribosomal protein uS19 family.

In terms of biological role, protein S19 forms a complex with S13 that binds strongly to the 16S ribosomal RNA. In Caldicellulosiruptor saccharolyticus (strain ATCC 43494 / DSM 8903 / Tp8T 6331), this protein is Small ribosomal subunit protein uS19.